The primary structure comprises 352 residues: Homeobox protein Mohawk (352 aa).

Residues 19 to 53 (GASERERGGRPYSGVLDSPHARPEVGIADGPPLKD) are disordered. A DNA-binding region (homeobox; TALE-type) is located at residues 71-132 (VRHKRQALQD…NARRRLKNTV (62 aa)). 2 disordered regions span residues 157-194 (LSVS…IKSE) and 245-272 (TRQR…SETE).

Belongs to the TALE/IRO homeobox family.

The protein localises to the nucleus. May act as a morphogenetic regulator of cell adhesion. The protein is Homeobox protein Mohawk (MKX) of Pongo abelii (Sumatran orangutan).